Here is a 2097-residue protein sequence, read N- to C-terminus: 1-phosphatidylinositol 3-phosphate 5-kinase (2097 aa).

Positions 1–44 are disordered; the sequence is MATDDKSSPTLDSANDLPRSPASPSHLTHFKPLTPDQDEPPFKS. An N-acetylalanine modification is found at Ala-2. Ser-23 and Ser-48 each carry phosphoserine; by autocatalysis. Residues 56 to 122 are disordered; it reads NKERGEGGQG…AEPACGGHDP (67 aa). Residues 66–81 are compositionally biased toward low complexity; sequence EQQSPSSSWASPQIPS. Phosphoserine is present on Ser-88. An FYVE-type zinc finger spans residues 158-218; the sequence is DSQCKECYDC…ACTYCRKIAL (61 aa). Positions 164, 167, 180, 183, 188, 191, 210, and 213 each coordinate Zn(2+). Residues Ser-299, Ser-307, and Ser-312 each carry the phosphoserine modification. A Phosphoserine; by PKB/AKT1 or PKB/AKT2 modification is found at Ser-318. Ser-329 is modified (phosphoserine). One can recognise a DEP domain in the interval 365–440; it reads HTSGMEFQDH…DEYALYRPLQ (76 aa). Polar residues predominate over residues 442 to 459; that stretch reads TEFSETPSPDSDSVNSVE. A disordered region spans residues 442 to 469; it reads TEFSETPSPDSDSVNSVEGHSEPSWFKD. The span at 460 to 469 shows a compositional bias: basic and acidic residues; sequence GHSEPSWFKD. Phosphoserine is present on Ser-475. A disordered region spans residues 484-505; the sequence is GDDNLANSASPSKRTSVSSFQS. Residues 488-505 are compositionally biased toward polar residues; sequence LANSASPSKRTSVSSFQS. The tract at residues 616 to 868 is chaperonin-like domain; that stretch reads MMALLQQLLQ…MICVAYHSQL (253 aa). 4 disordered regions span residues 895-928, 989-1022, 1171-1194, and 1511-1555; these read GRGEEGASQEQVSGSSLPQDPECPREALSSEDST, AVGNEQPETSQQTDEQQDPKSQMKAFRDPLQDDT, HSKDASCTSGGKSGNKTESDEERG, and FQQE…HNGE. Positions 902-912 are enriched in polar residues; the sequence is SQEQVSGSSLP. Positions 1175-1184 are enriched in polar residues; that stretch reads ASCTSGGKSG. Basic and acidic residues predominate over residues 1185–1194; sequence NKTESDEERG. Ser-1543 and Ser-1548 each carry phosphoserine. Ser-1668 carries the phosphoserine; by autocatalysis modification. The interval 1697–1742 is disordered; that stretch reads EGLPANSALDNRPKSSSPIRLPEISGGQTNRTVEAEPQPTKKASGM. A Phosphoserine modification is found at Ser-1753. A PIPK domain is found at 1757–2083; the sequence is SSQKRETLRG…RFCEAMDKYF (327 aa). Residues 1781 to 1800 are disordered; that stretch reads GLESQGLEPQDEVDGGDTQK. Residues 1841–2097 are catalytic; the sequence is EEEFIRSLSH…DHWTGLDLNC (257 aa). Ser-1968 and Ser-2052 each carry phosphoserine; by autocatalysis.

In terms of assembly, component of the PI(3,5)P2 regulatory complex/PAS complex, at least composed of PIKFYVE, FIG4 and VAC14. VAC14 nucleates the assembly of the complex and serves as a scaffold by pentamerizing into a star-shaped structure, which can bind a single copy each of PIKFYVE and FIG4 and coordinates their activities. Interacts (via chaperonin-like domain) with RABEPK; the interaction recruits RABEPK to the endosomal membrane. Interacts with SPAG9. Interacts with EGFR. Mn(2+) is required as a cofactor. In terms of processing, phosphorylated in response to insulin at Ser-318 in a protein kinase B (PKB)-dependent manner. Autophosphorylates which down-regulates lipid product formation. Autophosphorylates which inhibits its own phosphatidylinositol 3-phosphate 5-kinase activity, stimulates FIG4 lipid phosphatase activity and down-regulates lipid product formation. Dephosphorylated by FIG4 in the PI(3,5)P2 regulatory complex, at Ser-48, Ser-1668 and Ser-2052. Phosphorylated in response to insulin at Ser-318 in a protein kinase B (PKB)-dependent manner. In terms of tissue distribution, ubiquitous.

Its subcellular location is the endosome membrane. The protein localises to the early endosome membrane. It is found in the cytoplasmic vesicle. It localises to the phagosome membrane. The protein resides in the late endosome membrane. The catalysed reaction is a 1,2-diacyl-sn-glycero-3-phospho-(1D-myo-inositol-3-phosphate) + ATP = a 1,2-diacyl-sn-glycero-3-phospho-(1D-myo-inositol-3,5-bisphosphate) + ADP + H(+). It carries out the reaction a 1,2-diacyl-sn-glycero-3-phospho-(1D-myo-inositol) + ATP = a 1,2-diacyl-sn-glycero-3-phospho-(1D-myo-inositol-5-phosphate) + ADP + H(+). The enzyme catalyses L-seryl-[protein] + ATP = O-phospho-L-seryl-[protein] + ADP + H(+). With respect to regulation, inhibited by apilimod and YM201636. Its function is as follows. Dual specificity kinase implicated in myriad essential cellular processes such as maintenance of endomembrane homeostasis, and endocytic-vacuolar pathway, lysosomal trafficking, nuclear transport, stress- or hormone-induced signaling and cell cycle progression. The PI(3,5)P2 regulatory complex regulates both the synthesis and turnover of phosphatidylinositol 3,5-bisphosphate (PtdIns(3,5)P2). Sole enzyme to catalyze the phosphorylation of phosphatidylinositol 3-phosphate on the fifth hydroxyl of the myo-inositol ring, to form (PtdIns(3,5)P2). Also catalyzes the phosphorylation of phosphatidylinositol on the fifth hydroxyl of the myo-inositol ring, to form phosphatidylinositol 5-phosphate (PtdIns(5)P). Has serine-protein kinase activity and is able to autophosphorylate and transphosphorylate. Autophosphorylation inhibits its own phosphatidylinositol 3-phosphate 5-kinase activity, stimulates FIG4 lipid phosphatase activity and down-regulates lipid product formation. Involved in key endosome operations such as fission and fusion in the course of endosomal cargo transport. Required for the maturation of early into late endosomes, phagosomes and lysosomes. Regulates vacuole maturation and nutrient recovery following engulfment of macromolecules, initiates the redistribution of accumulated lysosomal contents back into the endosome network. Critical regulator of the morphology, degradative activity, and protein turnover of the endolysosomal system in macrophages and platelets. In neutrophils, critical to perform chemotaxis, generate ROS, and undertake phagosome fusion with lysosomes. Plays a key role in the processing and presentation of antigens by major histocompatibility complex class II (MHC class II) mediated by CTSS. Regulates melanosome biogenesis by controlling the delivery of proteins from the endosomal compartment to the melanosome. Essential for systemic glucose homeostasis, mediates insulin-induced signals for endosome/actin remodeling in the course of GLUT4 translocation/glucose uptake activation. Supports microtubule-based endosome-to-trans-Golgi network cargo transport, trhough association with SPAG9 and RABEPK. Mediates EGFR trafficking to the nucleus. The sequence is that of 1-phosphatidylinositol 3-phosphate 5-kinase from Mus musculus (Mouse).